A 577-amino-acid polypeptide reads, in one-letter code: Arginine--tRNA ligase (577 aa).

Positions 122 to 132 (PNVAKEMHVGH) match the 'HIGH' region motif.

It belongs to the class-I aminoacyl-tRNA synthetase family. Monomer.

The protein resides in the cytoplasm. It catalyses the reaction tRNA(Arg) + L-arginine + ATP = L-arginyl-tRNA(Arg) + AMP + diphosphate. The protein is Arginine--tRNA ligase of Escherichia coli O1:K1 / APEC.